The sequence spans 403 residues: MRKFYTSESVSEGHPDKLADFISDSILDEFLRQEPTSRVAVETLVTTGMAVVAGEVRAITAHVDVQKTVRDAVMKVGYTRANYGFDAEYSAVLVSIHEQSPEIAEGVDHSEEWRGMSEAERALPENAYSLVGAGDQGLMFGYATDETPELMPLPISLAHQLTRRLAELRKNGTLPYLRPDAKAQVTVVRDGDVHDASETLVDTIVISTQHGEDVTQEQIRQDMLKHVIQAVIPAEYLTPDTKYFINPSGRFVIGGPHGDTGLTGRKIIVDTYGGAVPHGGGAFSGKDPTKVDRSAAYYARYIAKNIVAAGLARRALVEVAYAIGRAHPVSLRVDTYGTGTVSDERLAQLVEAHFDARPQAIIAQLDLQRPIYAQTAAYGHFGRPEFPWEQTDRAEALRQAAQG.

Residue histidine 14 coordinates ATP. Aspartate 16 provides a ligand contact to Mg(2+). Glutamate 42 serves as a coordination point for K(+). Glutamate 55 and glutamine 99 together coordinate L-methionine. The segment at 99–109 is flexible loop; the sequence is QSPEIAEGVDH. ATP-binding positions include 180–182, 250–251, aspartate 259, 265–266, alanine 282, and lysine 286; these read DAK, RF, and RK. Residue aspartate 259 participates in L-methionine binding. Lysine 290 contributes to the L-methionine binding site.

It belongs to the AdoMet synthase family. As to quaternary structure, homotetramer; dimer of dimers. Mg(2+) is required as a cofactor. K(+) serves as cofactor.

It is found in the cytoplasm. It catalyses the reaction L-methionine + ATP + H2O = S-adenosyl-L-methionine + phosphate + diphosphate. The protein operates within amino-acid biosynthesis; S-adenosyl-L-methionine biosynthesis; S-adenosyl-L-methionine from L-methionine: step 1/1. Functionally, catalyzes the formation of S-adenosylmethionine (AdoMet) from methionine and ATP. The overall synthetic reaction is composed of two sequential steps, AdoMet formation and the subsequent tripolyphosphate hydrolysis which occurs prior to release of AdoMet from the enzyme. This Deinococcus deserti (strain DSM 17065 / CIP 109153 / LMG 22923 / VCD115) protein is S-adenosylmethionine synthase.